A 362-amino-acid polypeptide reads, in one-letter code: Glutamate 5-kinase (362 aa).

K3 is an ATP binding site. Residues S43, D128, and N140 each coordinate substrate. Residues 160–161 (TD) and 202–208 (TGGMRTK) contribute to the ATP site. The region spanning 267–348 (AGAILIDDGA…REIENVLGYS (82 aa)) is the PUA domain.

Belongs to the glutamate 5-kinase family.

The protein localises to the cytoplasm. The enzyme catalyses L-glutamate + ATP = L-glutamyl 5-phosphate + ADP. The protein operates within amino-acid biosynthesis; L-proline biosynthesis; L-glutamate 5-semialdehyde from L-glutamate: step 1/2. In terms of biological role, catalyzes the transfer of a phosphate group to glutamate to form L-glutamate 5-phosphate. This is Glutamate 5-kinase from Xanthomonas euvesicatoria pv. vesicatoria (strain 85-10) (Xanthomonas campestris pv. vesicatoria).